A 369-amino-acid polypeptide reads, in one-letter code: Anhydro-N-acetylmuramic acid kinase (369 aa).

12–19 contacts ATP; it reads GTSLDGVD.

It belongs to the anhydro-N-acetylmuramic acid kinase family.

The enzyme catalyses 1,6-anhydro-N-acetyl-beta-muramate + ATP + H2O = N-acetyl-D-muramate 6-phosphate + ADP + H(+). It functions in the pathway amino-sugar metabolism; 1,6-anhydro-N-acetylmuramate degradation. The protein operates within cell wall biogenesis; peptidoglycan recycling. Its function is as follows. Catalyzes the specific phosphorylation of 1,6-anhydro-N-acetylmuramic acid (anhMurNAc) with the simultaneous cleavage of the 1,6-anhydro ring, generating MurNAc-6-P. Is required for the utilization of anhMurNAc either imported from the medium or derived from its own cell wall murein, and thus plays a role in cell wall recycling. This is Anhydro-N-acetylmuramic acid kinase from Escherichia coli O1:K1 / APEC.